The following is a 180-amino-acid chain: Hypoxanthine-guanine phosphoribosyltransferase (180 aa).

Lys-43 and Gly-44 together coordinate diphosphate. Residues Glu-99 and Asp-100 each coordinate Mg(2+). Asp-103 functions as the Proton acceptor in the catalytic mechanism. Residues Lys-131, 152–153, and Asp-159 each bind GMP; that span reads FI. Diphosphate is bound at residue Arg-165.

It belongs to the purine/pyrimidine phosphoribosyltransferase family. The cofactor is Mg(2+).

The protein localises to the cytoplasm. It carries out the reaction IMP + diphosphate = hypoxanthine + 5-phospho-alpha-D-ribose 1-diphosphate. The enzyme catalyses GMP + diphosphate = guanine + 5-phospho-alpha-D-ribose 1-diphosphate. It functions in the pathway purine metabolism; IMP biosynthesis via salvage pathway; IMP from hypoxanthine: step 1/1. Its pathway is purine metabolism; GMP biosynthesis via salvage pathway; GMP from guanine: step 1/1. In terms of biological role, purine salvage pathway enzyme that catalyzes the transfer of the ribosyl-5-phosphate group from 5-phospho-alpha-D-ribose 1-diphosphate (PRPP) to the N9 position of the 6-oxopurines hypoxanthine and guanine to form the corresponding ribonucleotides IMP (inosine 5'-monophosphate) and GMP (guanosine 5'-monophosphate), with the release of PPi. In Streptococcus pyogenes serotype M3 (strain ATCC BAA-595 / MGAS315), this protein is Hypoxanthine-guanine phosphoribosyltransferase (hpt).